The primary structure comprises 267 residues: Glucosamine-6-phosphate deaminase (267 aa).

Asp72 functions as the Proton acceptor; for enolization step in the catalytic mechanism. Catalysis depends on Asp141, which acts as the For ring-opening step. His143 serves as the catalytic Proton acceptor; for ring-opening step. Glu148 serves as the catalytic For ring-opening step.

Belongs to the glucosamine/galactosamine-6-phosphate isomerase family. NagB subfamily. In terms of assembly, homohexamer.

The enzyme catalyses alpha-D-glucosamine 6-phosphate + H2O = beta-D-fructose 6-phosphate + NH4(+). The protein operates within amino-sugar metabolism; N-acetylneuraminate degradation; D-fructose 6-phosphate from N-acetylneuraminate: step 5/5. With respect to regulation, allosterically activated by N-acetylglucosamine 6-phosphate (GlcNAc6P). Catalyzes the reversible isomerization-deamination of glucosamine 6-phosphate (GlcN6P) to form fructose 6-phosphate (Fru6P) and ammonium ion. This is Glucosamine-6-phosphate deaminase from Mannheimia succiniciproducens (strain KCTC 0769BP / MBEL55E).